The chain runs to 502 residues: Nostrin (502 aa).

Positions 1-260 constitute an F-BAR domain; that stretch reads MRDPLTDCSY…AISKVDVEKD (260 aa). Ser114 is modified (phosphoserine). Coiled-coil stretches lie at residues 160 to 230 and 305 to 335; these read SMTQ…LNQY and KLWR…SSAS. One can recognise an REM-1 domain in the interval 292-372; sequence PMDKERRKSL…SYKLSTVLAD (81 aa). Residues 413 to 437 are disordered; sequence KAESKAPAGEQNNPSSSRPGSSVSQ. Residues 423 to 437 are compositionally biased toward low complexity; it reads QNNPSSSRPGSSVSQ. The 60-residue stretch at 438-497 folds into the SH3 domain; that stretch reads GNNQLCKALYTFQARQDDELNLEKGDIVTIHEKKEEGWWFGSLNGKKGHFPAAYVEELPP. Ser479 is subject to Phosphoserine.

In terms of assembly, homotrimer. Interacts with DAB2. Interacts with NOS3, WASL and CAV1. Interacts (via SH3 domain) with DNM2; this interaction allows the recruitment of NOS3 to dynamin-positive structures. Over-expressed in brain microcapillaries from spontaneously hypertensive rats.

The protein localises to the cell membrane. It localises to the cytoplasmic vesicle. Its subcellular location is the cytoplasm. The protein resides in the cytoskeleton. It is found in the nucleus. Functionally, multivalent adapter protein which may decrease NOS3 activity by inducing its translocation away from the plasma membrane. In Rattus norvegicus (Rat), this protein is Nostrin.